Reading from the N-terminus, the 54-residue chain is Large ribosomal subunit protein bL33 (54 aa).

The protein belongs to the bacterial ribosomal protein bL33 family.

The protein is Large ribosomal subunit protein bL33 of Symbiobacterium thermophilum (strain DSM 24528 / JCM 14929 / IAM 14863 / T).